A 636-amino-acid polypeptide reads, in one-letter code: 3-phosphoinositide-dependent protein kinase 1 (636 aa).

Composition is skewed to low complexity over residues Met1 to Thr20 and Ala27 to Ala37. Positions Met1–Ser45 are disordered. A Protein kinase domain is found at Phe69–Phe364. Residues Ala79–Ser81 and Lys98 contribute to the ATP site. The segment at Leu100–Phe149 is PIF-pocket. Residues Gly152–Val154 and Asp158 each bind ATP. Residue Asp197 is the Proton acceptor of the active site. The ATP site is built by Asp201 and Asp215. Disordered stretches follow at residues Thr233–Thr264 and Lys593–Pro636. Residues Asp550–Met631 adopt a coiled-coil conformation. Over residues Lys597 to Ser624 the composition is skewed to basic and acidic residues.

The protein belongs to the protein kinase superfamily. AGC Ser/Thr protein kinase family. PDPK1 subfamily. Interacts directly with sgk-1, akt-1 and akt-2.

It is found in the cytoplasm. It carries out the reaction L-seryl-[protein] + ATP = O-phospho-L-seryl-[protein] + ADP + H(+). The enzyme catalyses L-threonyl-[protein] + ATP = O-phospho-L-threonyl-[protein] + ADP + H(+). Its function is as follows. Involved in the daf-2/insulin receptor-like transduction pathway, which controls longevity and prevents developmental arrest at the dauer stage. Phosphorylates and activates sgk-1, akt-1 and akt-2. The polypeptide is 3-phosphoinositide-dependent protein kinase 1 (Caenorhabditis elegans).